Consider the following 275-residue polypeptide: NH(3)-dependent NAD(+) synthetase (275 aa).

ATP is bound at residue 46–53; sequence GISGGQDS. Asp-52 contributes to the Mg(2+) binding site. Arg-140 is a binding site for deamido-NAD(+). Thr-160 lines the ATP pocket. Glu-165 provides a ligand contact to Mg(2+). Lys-173 and Asp-180 together coordinate deamido-NAD(+). ATP is bound by residues Lys-189 and Thr-211. 260–261 serves as a coordination point for deamido-NAD(+); sequence HK.

Belongs to the NAD synthetase family. Homodimer.

The enzyme catalyses deamido-NAD(+) + NH4(+) + ATP = AMP + diphosphate + NAD(+) + H(+). It functions in the pathway cofactor biosynthesis; NAD(+) biosynthesis; NAD(+) from deamido-NAD(+) (ammonia route): step 1/1. Catalyzes the ATP-dependent amidation of deamido-NAD to form NAD. Uses ammonia as a nitrogen source. This Escherichia coli O45:K1 (strain S88 / ExPEC) protein is NH(3)-dependent NAD(+) synthetase.